Here is a 986-residue protein sequence, read N- to C-terminus: Vacuolar membrane protease (986 aa).

Over 1-16 the chain is Cytoplasmic; the sequence is MAPLRLSRANPLAFAR. A helical transmembrane segment spans residues 17 to 37; sequence WPVTLITAVVYLAFLIPLLIV. Topologically, residues 38–392 are vacuolar; the sequence is HHVVPSPPTA…TTFVLFELHT (355 aa). Asn-121 carries an N-linked (GlcNAc...) asparagine glycan. His-176 and Asp-188 together coordinate Zn(2+). Glu-222 acts as the Proton acceptor in catalysis. Zn(2+)-binding residues include Glu-223, Glu-248, and His-321. The helical transmembrane segment at 393–413 threads the bilayer; that stretch reads LFALSVTLLVVAPLALLVTGI. At 414–444 the chain is on the cytoplasmic side; the sequence is ALTRADKMYLFRTSAKADESLDSVPLQGLRG. A helical transmembrane segment spans residues 445-465; the sequence is FFRFPFLFAIPTAVTVGLAYL. Residues 466–475 lie on the Vacuolar side of the membrane; that stretch reads VTKVNPLIIH. The helical transmembrane segment at 476–496 threads the bilayer; the sequence is SSEYAVWSMMLSAWTFLAWFV. Residues 497-510 lie on the Cytoplasmic side of the membrane; sequence SRMADFARPTALHR. The helical transmembrane segment at 511–531 threads the bilayer; that stretch reads IYTLTWMFVLAWVLLVISTVY. At 532–535 the chain is on the vacuolar side; the sequence is QNQR. Residues 536–556 traverse the membrane as a helical segment; that stretch reads GLAGSYSVFFFFSGTFLATWI. Over 557–668 the chain is Cytoplasmic; sequence SYLELFSLPR…SASLPTWTWT (112 aa). Over residues 573 to 585 the composition is skewed to polar residues; that stretch reads QNRPTSRRASSYG. A disordered region spans residues 573-622; that stretch reads QNRPTSRRASSYGGSRLGTASGEDHEEDDHDAEEEEEEQEPTESTSLLGG. Residues 596–613 are compositionally biased toward acidic residues; that stretch reads DHEEDDHDAEEEEEEQEP. A helical membrane pass occupies residues 669–689; that stretch reads LQFLLMAPLVLIMVGPLALLL. The Vacuolar portion of the chain corresponds to 690–704; the sequence is TSALHQTGQDGSSSL. Residues 705-725 form a helical membrane-spanning segment; it reads FIYVAIAALTTFLLTPLLPFI. Over 726-732 the chain is Cytoplasmic; the sequence is HRHTYHL. The chain crosses the membrane as a helical span at residues 733–753; it reads PVFLLLVFLGTLIYNLVAFPF. Residues 754–986 are Vacuolar-facing; the sequence is SPTNRLKLFF…LVEGWKGFSI (233 aa). N-linked (GlcNAc...) asparagine glycans are attached at residues Asn-799, Asn-840, and Asn-948. Residues 840–859 are disordered; that stretch reads NTTDDKEGDEDTHHPRKARI.

This sequence belongs to the peptidase M28 family. It depends on Zn(2+) as a cofactor.

It localises to the vacuole membrane. In terms of biological role, may be involved in vacuolar sorting and osmoregulation. In Aspergillus niger (strain ATCC MYA-4892 / CBS 513.88 / FGSC A1513), this protein is Vacuolar membrane protease.